The sequence spans 239 residues: Large ribosomal subunit protein uL3 (239 aa).

Gln-151 carries the post-translational modification N5-methylglutamine.

It belongs to the universal ribosomal protein uL3 family. As to quaternary structure, part of the 50S ribosomal subunit. Forms a cluster with proteins L14 and L19. In terms of processing, methylated by PrmB.

Its function is as follows. One of the primary rRNA binding proteins, it binds directly near the 3'-end of the 23S rRNA, where it nucleates assembly of the 50S subunit. In Ruegeria sp. (strain TM1040) (Silicibacter sp.), this protein is Large ribosomal subunit protein uL3.